The chain runs to 633 residues: DNA mismatch repair protein MutL (633 aa).

It belongs to the DNA mismatch repair MutL/HexB family.

This protein is involved in the repair of mismatches in DNA. It is required for dam-dependent methyl-directed DNA mismatch repair. May act as a 'molecular matchmaker', a protein that promotes the formation of a stable complex between two or more DNA-binding proteins in an ATP-dependent manner without itself being part of a final effector complex. The protein is DNA mismatch repair protein MutL of Pseudomonas fluorescens (strain SBW25).